We begin with the raw amino-acid sequence, 376 residues long: WW domain-binding protein 4 (376 aa).

The Matrin-type zinc finger occupies 11 to 42 (KFCDYCKCWIADNRPSVEFHERGKNHKENVAR). The segment covering 94–111 (PTVSPVISTVQPTPTSNQ) has biased composition (polar residues). Disordered regions lie at residues 94-127 (PTVSPVISTVQPTPTSNQQKEKKKKKKKKEASKG) and 192-324 (WEKP…ECLS). The span at 114 to 123 (EKKKKKKKKE) shows a compositional bias: basic residues. WW domains follow at residues 123–156 (EASKGGWVEGVTADGHCYYYDLITGASQWEKPEG) and 164–197 (TAAKAVWVEGLSEDGYTYYYNTETGESKWEKPED). The segment covering 219–272 (EDAKSSDSHSDSEGEQKKAGEASTETKKLIIKFKEKNKSTEKRIGPEIQKEKST) has biased composition (basic and acidic residues). Residues S228 and S230 each carry the phosphoserine modification. Residues 357-375 (KKRRLENGKSRNLRQRGDD) form an interaction with SNRNP200 region.

As to quaternary structure, component of the spliceosome B complex. Associated with U2 snRNPs. Binds splicing factors SNRPB, SNRPC and SF1. Interacts via the WW domains with the Pro-rich domains of KHDRBS1/SAM68. Interacts via the WW domains with the Pro-rich domains of WBP11. Interacts with SNRNP200.

Its subcellular location is the nucleus. The protein localises to the nucleus speckle. In terms of biological role, involved in pre-mRNA splicing as a component of the spliceosome. May play a role in cross-intron bridging of U1 and U2 snRNPs in the mammalian A complex. In Mus musculus (Mouse), this protein is WW domain-binding protein 4 (Wbp4).